We begin with the raw amino-acid sequence, 87 residues long: Sodium channel neurotoxin MeuNaTxalpha-5* (87 aa).

The first 19 residues, 1-19, serve as a signal peptide directing secretion; it reads MNYLILISFALLVITGVES. One can recognise an LCN-type CS-alpha/beta domain in the interval 21 to 85; the sequence is RDAYIAKPHN…VPIRIPGKCH (65 aa). Intrachain disulfides connect Cys31/Cys84, Cys35/Cys57, Cys43/Cys67, and Cys47/Cys69. Residues 86–87 constitute a propeptide, removed by a carboxypeptidase; it reads RR.

Belongs to the long (4 C-C) scorpion toxin superfamily. Sodium channel inhibitor family. Alpha subfamily. As to expression, expressed by the venom gland.

The protein localises to the secreted. Functionally, alpha toxins bind voltage-independently at site-3 of sodium channels (Nav) and inhibit the inactivation of the activated channels, thereby blocking neuronal transmission. This toxin inhibits inactivation of Nav1.6/SCN8A (EC(50)=790 nM) and drosophila DmNav1 (EC(50)=280 nM). The toxin (1 uM) does not significantly shift the midpoint of activation at the two channels, but induces a significant depolarizing shift in the V(1/2) of inactivation of the channels. Has antimicrobial activity. In Mesobuthus eupeus (Lesser Asian scorpion), this protein is Sodium channel neurotoxin MeuNaTxalpha-5*.